Here is a 422-residue protein sequence, read N- to C-terminus: AP-1 complex subunit mu-1-I (422 aa).

The MHD domain occupies 167-420 (KNEVFLDVIE…ITQNGEYEMR (254 aa)).

This sequence belongs to the adaptor complexes medium subunit family. In terms of assembly, adaptor protein complex 1 (AP-1) is a heterotetramer composed of two large adaptins (gamma- and beta'-type subunits), a medium adaptin (mu-type subunit AP47) and a small adaptin (sigma-type subunit AP19). Interacts (via N-terminus) with kvs-4. In terms of tissue distribution, expressed in the cholinergic motor neuron DA9.

It localises to the golgi apparatus. The protein resides in the cytoplasmic vesicle. Its subcellular location is the clathrin-coated vesicle membrane. The protein localises to the cell projection. It is found in the dendrite. Component of the adaptor complexes which link clathrin to receptors in coated vesicles. Clathrin-associated protein complexes are believed to interact with the cytoplasmic tails of membrane proteins, leading to their selection and concentration. Required for many aspects of development and behavior, including negative regulation of vulval differentiation. Required for the dendritic localization of potassium channel kvs-4 in the cholinergic motor neuron DA9. In Caenorhabditis elegans, this protein is AP-1 complex subunit mu-1-I (unc-101).